A 341-amino-acid polypeptide reads, in one-letter code: MPVNNKDINILGIETSCDETSAAVLRNGCELLSHIISSQIKTHQKYGGVVPEVASREHILHLQSVVEQALQEAKMGFGDLAGIAVTYGPGLVGSLLVGVAGAKAMAYGAGIPLLGVNHLEGHIYANFLHNPGLKFPLLALLVSGGHSHLVYFEGHGKYQVLGQTRDDAAGEALDKVARTLGLGYPGGPYIQKAALEGNPHAYEFPRAMLEPGSLDFSFSGVKSAVLNTLNSARMKGETVNVADVAASFQEAIVDVLVRKTLLALARTKAPTLVLAGGVAANTLLRERLTEATQKRGIAFSYPPPILCTDNGAMIATAGYYRYLDKDYAPWNLNAIPGLNLA.

Residues H118 and H122 each contribute to the Fe cation site. Substrate contacts are provided by residues 141 to 145 (LVSGG), D174, G187, and N281. D309 serves as a coordination point for Fe cation.

Belongs to the KAE1 / TsaD family. It depends on Fe(2+) as a cofactor.

The protein resides in the cytoplasm. It catalyses the reaction L-threonylcarbamoyladenylate + adenosine(37) in tRNA = N(6)-L-threonylcarbamoyladenosine(37) in tRNA + AMP + H(+). Functionally, required for the formation of a threonylcarbamoyl group on adenosine at position 37 (t(6)A37) in tRNAs that read codons beginning with adenine. Is involved in the transfer of the threonylcarbamoyl moiety of threonylcarbamoyl-AMP (TC-AMP) to the N6 group of A37, together with TsaE and TsaB. TsaD likely plays a direct catalytic role in this reaction. This chain is tRNA N6-adenosine threonylcarbamoyltransferase, found in Desulfitobacterium hafniense (strain Y51).